The following is a 358-amino-acid chain: Peptide chain release factor 1 (358 aa).

Position 233 is an N5-methylglutamine (Q233).

Belongs to the prokaryotic/mitochondrial release factor family. In terms of processing, methylated by PrmC. Methylation increases the termination efficiency of RF1.

The protein localises to the cytoplasm. Peptide chain release factor 1 directs the termination of translation in response to the peptide chain termination codons UAG and UAA. The chain is Peptide chain release factor 1 from Lysinibacillus sphaericus (strain C3-41).